The primary structure comprises 326 residues: Virulence-associated V antigen (326 aa).

The protein resides in the secreted. Functionally, possibly involved in calcium regulation of YOP expression, which includes the export process. This chain is Virulence-associated V antigen (lcrV), found in Yersinia pestis.